The primary structure comprises 438 residues: Glutamate-1-semialdehyde 2,1-aminomutase (438 aa).

N6-(pyridoxal phosphate)lysine is present on lysine 272.

This sequence belongs to the class-III pyridoxal-phosphate-dependent aminotransferase family. HemL subfamily. As to quaternary structure, homodimer. Requires pyridoxal 5'-phosphate as cofactor.

The protein localises to the cytoplasm. The enzyme catalyses (S)-4-amino-5-oxopentanoate = 5-aminolevulinate. It functions in the pathway porphyrin-containing compound metabolism; protoporphyrin-IX biosynthesis; 5-aminolevulinate from L-glutamyl-tRNA(Glu): step 2/2. It participates in porphyrin-containing compound metabolism; chlorophyll biosynthesis. In Chloroflexus aggregans (strain MD-66 / DSM 9485), this protein is Glutamate-1-semialdehyde 2,1-aminomutase.